Reading from the N-terminus, the 118-residue chain is Large ribosomal subunit protein bL20 (118 aa).

It belongs to the bacterial ribosomal protein bL20 family.

Its function is as follows. Binds directly to 23S ribosomal RNA and is necessary for the in vitro assembly process of the 50S ribosomal subunit. It is not involved in the protein synthesizing functions of that subunit. The sequence is that of Large ribosomal subunit protein bL20 from Azotobacter vinelandii.